The sequence spans 253 residues: Small ribosomal subunit protein uS3 (253 aa).

The region spanning 21 to 92 (LNEFLTRELA…SVELYAEKVA (72 aa)) is the KH type-2 domain. The disordered stretch occupies residues 211 to 253 (VEPKDEILPTTPISEQKGGKPDPQVPQQPPQQPPAMPPPVPTA). Pro residues predominate over residues 233–253 (PQVPQQPPQQPPAMPPPVPTA).

Belongs to the universal ribosomal protein uS3 family.

The protein localises to the cytoplasm. Its subcellular location is the nucleus. It localises to the nucleolus. It is found in the mitochondrion inner membrane. The protein resides in the cytoskeleton. The protein localises to the spindle. The catalysed reaction is 2'-deoxyribonucleotide-(2'-deoxyribose 5'-phosphate)-2'-deoxyribonucleotide-DNA = a 3'-end 2'-deoxyribonucleotide-(2,3-dehydro-2,3-deoxyribose 5'-phosphate)-DNA + a 5'-end 5'-phospho-2'-deoxyribonucleoside-DNA + H(+). Component of the small ribosomal subunit. The ribosome is a large ribonucleoprotein complex responsible for the synthesis of proteins in the cell. Has endonuclease activity and plays a role in repair of damaged DNA. Also involved in other processes including regulation of transcription, translation of its cognate mRNA, spindle formation and chromosome movement during mitosis, and apoptosis. The chain is Small ribosomal subunit protein uS3 (RPS3) from Ambystoma mexicanum (Axolotl).